Reading from the N-terminus, the 267-residue chain is Glucosamine-6-phosphate deaminase (267 aa).

The active-site Proton acceptor; for enolization step is the D72. D141 functions as the For ring-opening step in the catalytic mechanism. H143 functions as the Proton acceptor; for ring-opening step in the catalytic mechanism. E148 functions as the For ring-opening step in the catalytic mechanism.

It belongs to the glucosamine/galactosamine-6-phosphate isomerase family. NagB subfamily.

The enzyme catalyses alpha-D-glucosamine 6-phosphate + H2O = beta-D-fructose 6-phosphate + NH4(+). Its pathway is amino-sugar metabolism; N-acetylneuraminate degradation; D-fructose 6-phosphate from N-acetylneuraminate: step 5/5. With respect to regulation, allosterically activated by N-acetylglucosamine 6-phosphate (GlcNAc6P). In terms of biological role, catalyzes the reversible isomerization-deamination of glucosamine 6-phosphate (GlcN6P) to form fructose 6-phosphate (Fru6P) and ammonium ion. This is Glucosamine-6-phosphate deaminase from Borrelia hermsii (strain HS1 / DAH).